A 450-amino-acid polypeptide reads, in one-letter code: ATP-dependent protease ATPase subunit HslU (450 aa).

Residues Val-29, 71–76, Asp-261, Glu-328, and Arg-400 contribute to the ATP site; that span reads GVGKTE.

Belongs to the ClpX chaperone family. HslU subfamily. A double ring-shaped homohexamer of HslV is capped on each side by a ring-shaped HslU homohexamer. The assembly of the HslU/HslV complex is dependent on binding of ATP.

It is found in the cytoplasm. Functionally, ATPase subunit of a proteasome-like degradation complex; this subunit has chaperone activity. The binding of ATP and its subsequent hydrolysis by HslU are essential for unfolding of protein substrates subsequently hydrolyzed by HslV. HslU recognizes the N-terminal part of its protein substrates and unfolds these before they are guided to HslV for hydrolysis. The protein is ATP-dependent protease ATPase subunit HslU of Rickettsia canadensis (strain McKiel).